The sequence spans 541 residues: Chaperonin GroEL 1 (541 aa).

Residues 30–33 (TLGP), 87–91 (DGTTT), Gly-414, 478–480 (NAA), and Asp-494 each bind ATP.

It belongs to the chaperonin (HSP60) family. As to quaternary structure, forms a cylinder of 14 subunits composed of two heptameric rings stacked back-to-back. Interacts with the co-chaperonin GroES.

The protein localises to the cytoplasm. It carries out the reaction ATP + H2O + a folded polypeptide = ADP + phosphate + an unfolded polypeptide.. In terms of biological role, together with its co-chaperonin GroES, plays an essential role in assisting protein folding. The GroEL-GroES system forms a nano-cage that allows encapsulation of the non-native substrate proteins and provides a physical environment optimized to promote and accelerate protein folding. In Thermobifida fusca (strain YX), this protein is Chaperonin GroEL 1.